Reading from the N-terminus, the 67-residue chain is Probable Sec-independent protein translocase protein TatE (67 aa).

Residues 4–21 (ISITKLLVVAALVVLLFG) form a helical membrane-spanning segment.

It belongs to the TatA/E family. TatE subfamily.

The protein localises to the cell inner membrane. Part of the twin-arginine translocation (Tat) system that transports large folded proteins containing a characteristic twin-arginine motif in their signal peptide across membranes. TatE shares overlapping functions with TatA. The sequence is that of Probable Sec-independent protein translocase protein TatE from Shigella flexneri.